The sequence spans 567 residues: Sensor histidine kinase MtrB (567 aa).

The segment covering 1–15 (MIFGSRRRIRGRRGR) has biased composition (basic residues). The interval 1 to 20 (MIFGSRRRIRGRRGRSGPMT) is disordered. 2 helical membrane-spanning segments follow: residues 42–62 (VVAL…FVLT) and 213–233 (GTMA…ALLV). In terms of domain architecture, HAMP spans 235–287 (RQVVVPVRSASRIAERFAEGHLSERMPVRGEDDMARLAVSFNDMAESLSRQIA). The Histidine kinase domain occupies 302-519 (DVSHELRTPL…CFRLTLPMVR (218 aa)). At histidine 305 the chain carries Phosphohistidine; by autocatalysis. The span at 529-551 (PMKPIPQPVLQPVAQPNPQPMPP) shows a compositional bias: pro residues. The segment at 529 to 567 (PMKPIPQPVLQPVAQPNPQPMPPEYKERQRPREHAEWSG) is disordered. Over residues 552 to 567 (EYKERQRPREHAEWSG) the composition is skewed to basic and acidic residues.

Interacts with MrtA. Interacts with LpqB, probably extracytoplasmically via MtrB's sensor domain. Requires Mg(2+) as cofactor. It depends on Ca(2+) as a cofactor. Post-translationally, the C-terminal domain (residues 234-567) autophosphorylates.

It localises to the cell membrane. The catalysed reaction is ATP + protein L-histidine = ADP + protein N-phospho-L-histidine.. Its activity is regulated as follows. Ca(2+) ions inhibit the phosphotransfer from MtrB to MtrA. Its function is as follows. Member of the two-component regulatory system MtrA/MtrB. Probably functions as a membrane-associated protein kinase that phosphorylates MtrA in response to environmental signals. Autophosphorylates and transfers phosphate to MtrA in vitro. Overexpression of MtrA alone decreases bacterial virulence in mouse infection; co-expression of MtrA and MtrB restores normal bacterial growth, suggesting that bacterial growth in macrophages requires an optimal ratio of MtrB to MtrA. Probably plays a role in cell division. The protein is Sensor histidine kinase MtrB (mtrB) of Mycobacterium tuberculosis (strain ATCC 25618 / H37Rv).